Here is a 177-residue protein sequence, read N- to C-terminus: Acireductone dioxygenase (177 aa).

Fe(2+)-binding residues include His-99, His-101, Glu-105, and His-143. Residues His-99, His-101, Glu-105, and His-143 each contribute to the Ni(2+) site.

Belongs to the acireductone dioxygenase (ARD) family. As to quaternary structure, monomer. Fe(2+) is required as a cofactor. The cofactor is Ni(2+).

The catalysed reaction is 1,2-dihydroxy-5-(methylsulfanyl)pent-1-en-3-one + O2 = 3-(methylsulfanyl)propanoate + CO + formate + 2 H(+). It carries out the reaction 1,2-dihydroxy-5-(methylsulfanyl)pent-1-en-3-one + O2 = 4-methylsulfanyl-2-oxobutanoate + formate + 2 H(+). It functions in the pathway amino-acid biosynthesis; L-methionine biosynthesis via salvage pathway; L-methionine from S-methyl-5-thio-alpha-D-ribose 1-phosphate: step 5/6. Its function is as follows. Catalyzes 2 different reactions between oxygen and the acireductone 1,2-dihydroxy-3-keto-5-methylthiopentene (DHK-MTPene) depending upon the metal bound in the active site. Fe-containing acireductone dioxygenase (Fe-ARD) produces formate and 2-keto-4-methylthiobutyrate (KMTB), the alpha-ketoacid precursor of methionine in the methionine recycle pathway. Ni-containing acireductone dioxygenase (Ni-ARD) produces methylthiopropionate, carbon monoxide and formate, and does not lie on the methionine recycle pathway. The polypeptide is Acireductone dioxygenase (Leptospira interrogans serogroup Icterohaemorrhagiae serovar copenhageni (strain Fiocruz L1-130)).